The following is a 462-amino-acid chain: FAD-dependent monooxygenase opaC (462 aa).

The N-linked (GlcNAc...) asparagine glycan is linked to asparagine 10. Residues 14-34 (ITVIIIGLGIGGLTAAISCHL) form a helical membrane-spanning segment. Position 43 (aspartate 43) interacts with FAD. Asparagine 60 carries an N-linked (GlcNAc...) asparagine glycan. Arginine 115 is a binding site for FAD. Arginine 193 is a catalytic residue. Aspartate 322 and alanine 335 together coordinate FAD.

This sequence belongs to the paxM FAD-dependent monooxygenase family. Requires FAD as cofactor.

The protein resides in the membrane. It participates in secondary metabolite biosynthesis. Functionally, FAD-dependent monooxygenase; part of the gene cluster that mediates the biosynthesis of oxepinamides, derivatives of anthranilyl-containing tripeptides that share an oxepin ring and a fused pyrimidinone moiety. The nonribosomal peptide synthetase (NRPS) opaA assembles the quinazolinone core with D-Phe incorporation. The first adenylation domain (A1) of opaA loads and activates anthranilic acid whereas the second A domain (A2) is for activating of L-Phe, which is then converted to D-form by the E domain. The third A domain (A3) is responsible for L-Ile activation and the terminal condensation domain C3 for cyclization and releasing the NRPS product protuboxepin K. The cytochrome P450 monooxygenase opaB then catalyzes alone the oxepin ring formation to convert protuboxepin K into protuboxepin A. The flavoenzyme opaC installs subsequently one hydroxyl group at the oxepin ring, accompanied by double bond migration, to form 15-epi-oxepinamide E. The epimerase opaE changes the D-Phe residue back to L-form, leading to oxepinamide E, which is further methylated at the hydroxyl group at C-12 by the O-methyltransferase OpaF to yield oxepinamide F. This chain is FAD-dependent monooxygenase opaC, found in Aspergillus ustus.